The following is a 651-amino-acid chain: Cylicin-1 (651 aa).

Disordered regions lie at residues 110–241 (LKKA…CSEN) and 267–615 (NYSQ…CEPS). 2 stretches are compositionally biased toward basic and acidic residues: residues 111 to 129 (KKAEYKKSKDEKGGTPLKK) and 146 to 173 (QIVEEKTKRQNEADKTPLKSSHENEQSK). Residues 186-195 (QNSKTVSKNC) show a composition bias toward polar residues. Residues 196–205 (SQKDKKDSKN) show a composition bias toward basic and acidic residues. Over residues 230 to 241 (SNDPISEICSEN) the composition is skewed to polar residues. Over residues 271–281 (NNSKNYSLKYT) the composition is skewed to low complexity. 8 consecutive repeat copies span residues 278-305 (LKYTKYTKKDTKKNAKKSSDAESEDSKD), 306-342 (AKKDSKKVKKNVKKDDKKKDVKKDTESTDAESGDSKD), 343-379 (ERKDTKKDKKKLKKDDKKKDTKKYPESTDTESGDAKD), 380-417 (ARNDSRNLKKASKNDDKKKDAKKITFSTDSESELESKE), 418-453 (SQKDEKKDKKDSKTDNKKSVKNDEESTDADSEPKGD), 454-491 (SKKGKKDEKKGKKDSKKDDKKKDAKKNAESTEMESDLE), 492-531 (LKKDKKHSKEKKGSKKDIKKDARKDTESTDAEFDESSKTG), and 532-553 (FKTSTKIKGSDTESEESLYKPG). Composition is skewed to basic and acidic residues over residues 284–308 (TKKDTKKNAKKSSDAESEDSKDAKK), 318–331 (KKDDKKKDVKKDTE), 338–368 (GDSKDERKDTKKDKKKLKKDDKKKDTKKYPE), 375–402 (GDAKDARNDSRNLKKASKNDDKKKDAKK), 413–441 (LESKESQKDEKKDKKDSKTDNKKSVKNDE), and 448–482 (SEPKGDSKKGKKDEKKGKKDSKKDDKKKDAKKNAE). Residues 495–505 (DKKHSKEKKGS) show a composition bias toward basic residues. Residues 506 to 518 (KKDIKKDARKDTE) show a composition bias toward basic and acidic residues. Polar residues predominate over residues 529-538 (KTGFKTSTKI). Residues 532 to 553 (FKTSTKIKGSDTESEESLYKPG) are 8 X approximate tandem repeats. The segment covering 587–607 (TFNEKGEKASTGRVPPSREKP) has biased composition (basic and acidic residues).

As to quaternary structure, interacts with proteins of spermatozoa head including ACTL7A, CCIN, FAM209A and SPACA1; the interactions may be necessary for proper acrosome attachment to the nuclear envelope. Testis.

Its subcellular location is the cytoplasm. The protein localises to the cytoskeleton. It is found in the perinuclear theca. The protein resides in the calyx. In terms of biological role, plays a role in the establishment of normal sperm morphology during spermatogenesis and is required for acrosome attachment to the nuclear envelope. The chain is Cylicin-1 (CYLC1) from Homo sapiens (Human).